Here is a 214-residue protein sequence, read N- to C-terminus: Cytochrome b (214 aa).

4 helical membrane passes run 31–51, 75–96, 111–131, and 176–196; these read FGSM…FLAI, WIMQ…YTHI, WLSG…GYVL, and FFAL…IHII. Heme b contacts are provided by histidine 81 and histidine 95. Positions 180 and 194 each coordinate heme b. A ubiquinone is bound at residue histidine 199.

This sequence belongs to the cytochrome b family. As to quaternary structure, the cytochrome bc1 complex contains 3 respiratory subunits (MT-CYB, CYC1 and UQCRFS1), 2 core proteins (UQCRC1 and UQCRC2) and probably 6 low-molecular weight proteins. Requires heme b as cofactor.

The protein resides in the mitochondrion inner membrane. Functionally, component of the ubiquinol-cytochrome c reductase complex (complex III or cytochrome b-c1 complex) that is part of the mitochondrial respiratory chain. The b-c1 complex mediates electron transfer from ubiquinol to cytochrome c. Contributes to the generation of a proton gradient across the mitochondrial membrane that is then used for ATP synthesis. This chain is Cytochrome b (MT-CYB), found in Cerastes cerastes (Horned desert viper).